A 344-amino-acid chain; its full sequence is MQTLTIIRPDDMHLHLRDGDALKAVVPYTARQMGRAVIMPNLKPPVVSVADALAYKARIMAALPEGSAFEPLMTLYLTDNATSELVREAKAAGIVAFKLYPAGATTNSDSGVTDLFKLIPVLEEMAKQGILFLVHGEVTDPEIDIFDREAAFIGRVMKPVLAQVPNLKVVFEHITTAEAARLVLEAGDNVAATVTPQHLLLNRNDLLVGGVRPHHFCLPVLKRETHRQALVAAVTGEKAHKFFLGTDSAPHAKSAKENACGCAGMFSAMTAVELYAEVFEKAGALDKLEAFASKNGARFYGIPENAGTITLVKQSQTVPASVPYGDGELVPMRAGGEIGWTVQY.

Zn(2+) is bound by residues H13 and H15. Substrate-binding positions include 15–17 (HLR) and N41. K98, H135, and H173 together coordinate Zn(2+). At K98 the chain carries N6-carboxylysine. H135 lines the substrate pocket. L218 contributes to the substrate binding site. D247 lines the Zn(2+) pocket. The active site involves D247. Residues H251 and A263 each coordinate substrate.

This sequence belongs to the metallo-dependent hydrolases superfamily. DHOase family. Class II DHOase subfamily. As to quaternary structure, homodimer. Requires Zn(2+) as cofactor.

The catalysed reaction is (S)-dihydroorotate + H2O = N-carbamoyl-L-aspartate + H(+). It functions in the pathway pyrimidine metabolism; UMP biosynthesis via de novo pathway; (S)-dihydroorotate from bicarbonate: step 3/3. Functionally, catalyzes the reversible cyclization of carbamoyl aspartate to dihydroorotate. This chain is Dihydroorotase, found in Neisseria meningitidis serogroup C (strain 053442).